We begin with the raw amino-acid sequence, 464 residues long: NADH-quinone oxidoreductase subunit N 1 (464 aa).

Helical transmembrane passes span 6 to 26 (ILPE…ELFL), 33 to 53 (FLSV…FFVN), 65 to 85 (VDAL…FVLL), 98 to 118 (YGEL…MISS), 122 to 142 (AIIF…VGLF), 155 to 175 (YLVI…LVYA), 192 to 212 (FALG…AVPF), 237 to 257 (IGMY…FPDW), 259 to 279 (YVVM…AYAQ), 285 to 305 (LLAY…TAVD), 312 to 332 (LLFY…VLAI), 356 to 376 (LASM…AAVF), 401 to 421 (ASLI…LYSG), and 436 to 456 (FTVL…HVVL).

It belongs to the complex I subunit 2 family. As to quaternary structure, NDH-1 is composed of 14 different subunits. Subunits NuoA, H, J, K, L, M, N constitute the membrane sector of the complex.

It is found in the cell inner membrane. The enzyme catalyses a quinone + NADH + 5 H(+)(in) = a quinol + NAD(+) + 4 H(+)(out). Functionally, NDH-1 shuttles electrons from NADH, via FMN and iron-sulfur (Fe-S) centers, to quinones in the respiratory chain. The immediate electron acceptor for the enzyme in this species is believed to be ubiquinone. Couples the redox reaction to proton translocation (for every two electrons transferred, four hydrogen ions are translocated across the cytoplasmic membrane), and thus conserves the redox energy in a proton gradient. In Aquifex aeolicus (strain VF5), this protein is NADH-quinone oxidoreductase subunit N 1.